Consider the following 726-residue polypeptide: Probable alpha-galactosidase G (726 aa).

Residues asparagine 23, asparagine 166, and asparagine 456 are each glycosylated (N-linked (GlcNAc...) asparagine). The active-site Nucleophile is the aspartate 485. Residue aspartate 547 is the Proton donor of the active site. Residues asparagine 657 and asparagine 673 are each glycosylated (N-linked (GlcNAc...) asparagine).

It belongs to the glycosyl hydrolase 36 family. Homotetramer. Mg(2+) serves as cofactor. It depends on NAD(+) as a cofactor.

It is found in the secreted. The catalysed reaction is Hydrolysis of terminal, non-reducing alpha-D-galactose residues in alpha-D-galactosides, including galactose oligosaccharides, galactomannans and galactolipids.. Hydrolyzes a variety of simple alpha-D-galactoside as well as more complex molecules such as oligosaccharides and polysaccharides. Not active on paranitrophenyl-alpha-galactoside and raffinose. This is Probable alpha-galactosidase G (aglG) from Emericella nidulans (strain FGSC A4 / ATCC 38163 / CBS 112.46 / NRRL 194 / M139) (Aspergillus nidulans).